Consider the following 396-residue polypeptide: Tryptophan synthase beta chain (396 aa).

The residue at position 88 (Lys88) is an N6-(pyridoxal phosphate)lysine.

It belongs to the TrpB family. As to quaternary structure, tetramer of two alpha and two beta chains. Pyridoxal 5'-phosphate serves as cofactor.

It catalyses the reaction (1S,2R)-1-C-(indol-3-yl)glycerol 3-phosphate + L-serine = D-glyceraldehyde 3-phosphate + L-tryptophan + H2O. The protein operates within amino-acid biosynthesis; L-tryptophan biosynthesis; L-tryptophan from chorismate: step 5/5. Its function is as follows. The beta subunit is responsible for the synthesis of L-tryptophan from indole and L-serine. The polypeptide is Tryptophan synthase beta chain (Shewanella baltica (strain OS185)).